A 360-amino-acid chain; its full sequence is Histidinol-phosphate aminotransferase (360 aa).

At lysine 222 the chain carries N6-(pyridoxal phosphate)lysine.

Belongs to the class-II pyridoxal-phosphate-dependent aminotransferase family. Histidinol-phosphate aminotransferase subfamily. Homodimer. Requires pyridoxal 5'-phosphate as cofactor.

The catalysed reaction is L-histidinol phosphate + 2-oxoglutarate = 3-(imidazol-4-yl)-2-oxopropyl phosphate + L-glutamate. It functions in the pathway amino-acid biosynthesis; L-histidine biosynthesis; L-histidine from 5-phospho-alpha-D-ribose 1-diphosphate: step 7/9. The chain is Histidinol-phosphate aminotransferase from Listeria innocua serovar 6a (strain ATCC BAA-680 / CLIP 11262).